A 531-amino-acid chain; its full sequence is Peptide chain release factor 3 (531 aa).

One can recognise a tr-type G domain in the interval alanine 10–leucine 278. GTP contacts are provided by residues serine 19–threonine 26, aspartate 87–histidine 91, and asparagine 141–aspartate 144.

The protein belongs to the TRAFAC class translation factor GTPase superfamily. Classic translation factor GTPase family. PrfC subfamily.

It is found in the cytoplasm. Functionally, increases the formation of ribosomal termination complexes and stimulates activities of RF-1 and RF-2. It binds guanine nucleotides and has strong preference for UGA stop codons. It may interact directly with the ribosome. The stimulation of RF-1 and RF-2 is significantly reduced by GTP and GDP, but not by GMP. The sequence is that of Peptide chain release factor 3 from Thioalkalivibrio sulfidiphilus (strain HL-EbGR7).